We begin with the raw amino-acid sequence, 400 residues long: Tryptophan synthase beta chain (400 aa).

Position 90 is an N6-(pyridoxal phosphate)lysine (Lys-90).

It belongs to the TrpB family. In terms of assembly, tetramer of two alpha and two beta chains. It depends on pyridoxal 5'-phosphate as a cofactor.

The catalysed reaction is (1S,2R)-1-C-(indol-3-yl)glycerol 3-phosphate + L-serine = D-glyceraldehyde 3-phosphate + L-tryptophan + H2O. The protein operates within amino-acid biosynthesis; L-tryptophan biosynthesis; L-tryptophan from chorismate: step 5/5. Its function is as follows. The beta subunit is responsible for the synthesis of L-tryptophan from indole and L-serine. This chain is Tryptophan synthase beta chain (trpB), found in Bacillus subtilis (strain 168).